The following is a 335-amino-acid chain: MIEKIWFENHPVKYLLWPLLWPLSLLFGAISRRQKAAYQRGAKASFQASIPVIVVGNITAGGNGKTPVVIWLVEKLQQLGFKPGVVSRGYGAKAPVYPMVVDSESLTSHCGDEPKLIFERTGALVAVDPIRPNAVKRLIELGANIIVTDDGLQHYALQRDIEVVVVDGQRRFGNQQLIPLGPLREPTSRLQNVDFIITNGGDAHQGEIAMSLMPDMAVNLMTGEKVAVNELASLVAFAGIGHPPRFFKTLEQLGADVVVSQGFADHQDFDPEAIAKLAHQGKNVIMTEKDAVKCRRFAQNNWWYLPVSAQFSSHDQQRILQRITEVVKEYGSSTA.

59–66 (TAGGNGKT) provides a ligand contact to ATP.

It belongs to the LpxK family.

It carries out the reaction a lipid A disaccharide + ATP = a lipid IVA + ADP + H(+). It participates in glycolipid biosynthesis; lipid IV(A) biosynthesis; lipid IV(A) from (3R)-3-hydroxytetradecanoyl-[acyl-carrier-protein] and UDP-N-acetyl-alpha-D-glucosamine: step 6/6. Functionally, transfers the gamma-phosphate of ATP to the 4'-position of a tetraacyldisaccharide 1-phosphate intermediate (termed DS-1-P) to form tetraacyldisaccharide 1,4'-bis-phosphate (lipid IVA). This is Tetraacyldisaccharide 4'-kinase from Vibrio vulnificus (strain YJ016).